Consider the following 610-residue polypeptide: uncharacterized protein (610 aa).

Residues 1–28 (MDSPSTSESPLKKNTIQDFGESNMTESP) show a composition bias toward polar residues. Residues 1–36 (MDSPSTSESPLKKNTIQDFGESNMTESPQSKEEIDE) form a disordered region. The RING-type zinc finger occupies 41-82 (CSVCKNEIIDTTSLSDCCHEFCYDCIVGWLTKGSGPFCPMCK). 2 disordered regions span residues 390 to 411 (YRGQ…FRPA) and 431 to 515 (TSSA…SADR). Residues 432 to 447 (SSAGAGSARSRGSDSV) are compositionally biased toward low complexity. Composition is skewed to acidic residues over residues 448-470 (VEID…EDSD) and 478-487 (SEEDSDEEIQ).

This is an uncharacterized protein from Caenorhabditis elegans.